The chain runs to 474 residues: Coronin-1C (474 aa).

6 WD repeats span residues 25 to 70, 78 to 118, 128 to 168, 172 to 202, 215 to 249, and 263 to 303; these read DDIR…GRID, GHTG…LTLS, GHSK…ALIN, MHSD…RVID, AHEG…ALWN, and DTSN…PYVH. Residues 436-474 are a coiled coil; it reads QNEAKLDEILKEIKSIKDTICNQDERISKLEQQMAKIAA. The residue at position 446 (lysine 446) is an N6-acetyllysine.

This sequence belongs to the WD repeat coronin family. As to quaternary structure, binds F-actin. Interacts with RCC2. Interacts preferentially with nucleotide-free and GDP-bound RAC1. Interacts with VIM (via head domain). Isoform 1 and isoform 2 appear as homotrimers, while isoform 3 seems to exist as monomers. Interacts with MICAL2; this interaction recruits MICAL2 to the actin filaments. In terms of tissue distribution, ubiquitous.

It is found in the cell membrane. It localises to the cell projection. The protein localises to the lamellipodium. Its subcellular location is the ruffle membrane. The protein resides in the cytoplasm. It is found in the cytoskeleton. It localises to the cell cortex. The protein localises to the endosome membrane. Its subcellular location is the sarcolemma. The protein resides in the myofibril. It is found in the sarcomere. It localises to the synapse. Its function is as follows. Plays a role in directed cell migration by regulating the activation and subcellular location of RAC1. Increases the presence of activated RAC1 at the leading edge of migrating cells. Required for normal organization of the cytoskeleton, including the actin cytoskeleton, microtubules and the vimentin intermediate filaments. Plays a role in endoplasmic reticulum-associated endosome fission: localizes to endosome membrane tubules and promotes recruitment of TMCC1, leading to recruitment of the endoplasmic reticulum to endosome tubules for fission. Endosome membrane fission of early and late endosomes is essential to separate regions destined for lysosomal degradation from carriers to be recycled to the plasma membrane. Required for normal cell proliferation, cell migration, and normal formation of lamellipodia. Required for normal distribution of mitochondria within cells. Involved in myogenic differentiation. The sequence is that of Coronin-1C from Homo sapiens (Human).